A 402-amino-acid polypeptide reads, in one-letter code: UDP-N-acetylmuramoylalanine--D-glutamate ligase (402 aa).

ATP is bound at residue 97 to 103; the sequence is GTNGKTT.

It belongs to the MurCDEF family.

The protein localises to the cytoplasm. It carries out the reaction UDP-N-acetyl-alpha-D-muramoyl-L-alanine + D-glutamate + ATP = UDP-N-acetyl-alpha-D-muramoyl-L-alanyl-D-glutamate + ADP + phosphate + H(+). The protein operates within cell wall biogenesis; peptidoglycan biosynthesis. Functionally, cell wall formation. Catalyzes the addition of glutamate to the nucleotide precursor UDP-N-acetylmuramoyl-L-alanine (UMA). This is UDP-N-acetylmuramoylalanine--D-glutamate ligase from Campylobacter jejuni subsp. jejuni serotype O:6 (strain 81116 / NCTC 11828).